Here is a 501-residue protein sequence, read N- to C-terminus: Phytoene desaturase (lycopene-forming) (501 aa).

Residue isoleucine 12–glycine 45 coordinates FAD.

This sequence belongs to the carotenoid/retinoid oxidoreductase family. FAD is required as a cofactor.

It carries out the reaction 15-cis-phytoene + 4 A = all-trans-lycopene + 4 AH2. The protein operates within carotenoid biosynthesis; astaxanthin biosynthesis. In terms of biological role, this enzyme converts phytoene into lycopene via the intermediaries of phytofluene, zeta-carotene and neurosporene by the introduction of four double bonds. This is Phytoene desaturase (lycopene-forming) (crtI) from Paracoccus sp. (strain N81106 / MBIC 01143) (Agrobacterium aurantiacum).